We begin with the raw amino-acid sequence, 321 residues long: Fibronectin type III domain-containing protein 8 (321 aa).

The region spanning 175–277 is the Fibronectin type-III domain; the sequence is VPEVPFICEH…KPYKFATVST (103 aa).

The protein is Fibronectin type III domain-containing protein 8 (Fndc8) of Mus musculus (Mouse).